A 467-amino-acid polypeptide reads, in one-letter code: ATP synthase subunit beta (467 aa).

150–157 lines the ATP pocket; it reads GGAGVGKT.

Belongs to the ATPase alpha/beta chains family. As to quaternary structure, F-type ATPases have 2 components, CF(1) - the catalytic core - and CF(0) - the membrane proton channel. CF(1) has five subunits: alpha(3), beta(3), gamma(1), delta(1), epsilon(1). CF(0) has three main subunits: a(1), b(2) and c(9-12). The alpha and beta chains form an alternating ring which encloses part of the gamma chain. CF(1) is attached to CF(0) by a central stalk formed by the gamma and epsilon chains, while a peripheral stalk is formed by the delta and b chains.

The protein resides in the cell inner membrane. The catalysed reaction is ATP + H2O + 4 H(+)(in) = ADP + phosphate + 5 H(+)(out). Produces ATP from ADP in the presence of a proton gradient across the membrane. The catalytic sites are hosted primarily by the beta subunits. This chain is ATP synthase subunit beta, found in Vibrio parahaemolyticus serotype O3:K6 (strain RIMD 2210633).